The chain runs to 467 residues: MTSTPATIRTRFAPSPTGFLHLGGARTALFSWAFARHHQGVFVLRIEDTDLERSTPEAVQAILDSMDWLGMQPDEGPFYQMQRMDRYREVIAQMLQAGTAYHCYSSPEEVEAMREAARARGLKPRYDGTWRPEPGKTLPPVPAGRKPVVRFKNPQDGATGWNDMVKGPISFDNTELDDLIIARPDGTPTYNFCVVVDDWDMGITHVLRGDDHVNNTPRQINILRALGATLPEYGHVPMILGPDGEKLSKRHGAVNVMEYDAQGYLPEAMVNYLARLGWSHGDDELFTREQLVQWFDTRHLSKSASQWDPKKLNWVNAHYIKQMDNAELAARVAPRIERRGGNPAAVDLAAAMGLLKDRAETLEQLAESALLFCKPYQPAPAELAEQHLTPAAREALADFAQRAQGADWTREAIAALIKAVLADRGLKMPQLAIPLRVAVVGQTQTPAVDAVLALVGKDAVLQRLAAL.

The short motif at 14 to 24 (PSPTGFLHLGG) is the 'HIGH' region element. The segment covering 124 to 134 (PRYDGTWRPEP) has biased composition (basic and acidic residues). A disordered region spans residues 124 to 156 (PRYDGTWRPEPGKTLPPVPAGRKPVVRFKNPQD). The 'KMSKS' region motif lies at 246–250 (KLSKR). Lysine 249 serves as a coordination point for ATP.

It belongs to the class-I aminoacyl-tRNA synthetase family. Glutamate--tRNA ligase type 1 subfamily. As to quaternary structure, monomer.

The protein localises to the cytoplasm. It catalyses the reaction tRNA(Glu) + L-glutamate + ATP = L-glutamyl-tRNA(Glu) + AMP + diphosphate. In terms of biological role, catalyzes the attachment of glutamate to tRNA(Glu) in a two-step reaction: glutamate is first activated by ATP to form Glu-AMP and then transferred to the acceptor end of tRNA(Glu). In Bordetella petrii (strain ATCC BAA-461 / DSM 12804 / CCUG 43448), this protein is Glutamate--tRNA ligase.